The chain runs to 370 residues: Dual-specificity RNA methyltransferase RlmN (370 aa).

E93 (proton acceptor) is an active-site residue. Residues E99–D337 form the Radical SAM core domain. A disulfide bridge links C106 with C343. 3 residues coordinate [4Fe-4S] cluster: C113, C117, and C120. Residues G167–E168, S199, S221–H223, and N300 contribute to the S-adenosyl-L-methionine site. C343 functions as the S-methylcysteine intermediate in the catalytic mechanism.

This sequence belongs to the radical SAM superfamily. RlmN family. [4Fe-4S] cluster is required as a cofactor.

Its subcellular location is the cytoplasm. The enzyme catalyses adenosine(2503) in 23S rRNA + 2 reduced [2Fe-2S]-[ferredoxin] + 2 S-adenosyl-L-methionine = 2-methyladenosine(2503) in 23S rRNA + 5'-deoxyadenosine + L-methionine + 2 oxidized [2Fe-2S]-[ferredoxin] + S-adenosyl-L-homocysteine. It carries out the reaction adenosine(37) in tRNA + 2 reduced [2Fe-2S]-[ferredoxin] + 2 S-adenosyl-L-methionine = 2-methyladenosine(37) in tRNA + 5'-deoxyadenosine + L-methionine + 2 oxidized [2Fe-2S]-[ferredoxin] + S-adenosyl-L-homocysteine. Functionally, specifically methylates position 2 of adenine 2503 in 23S rRNA and position 2 of adenine 37 in tRNAs. m2A2503 modification seems to play a crucial role in the proofreading step occurring at the peptidyl transferase center and thus would serve to optimize ribosomal fidelity. This Francisella tularensis subsp. mediasiatica (strain FSC147) protein is Dual-specificity RNA methyltransferase RlmN.